A 490-amino-acid chain; its full sequence is Aspartyl/glutamyl-tRNA(Asn/Gln) amidotransferase subunit B (490 aa).

The protein belongs to the GatB/GatE family. GatB subfamily. Heterotrimer of A, B and C subunits.

The catalysed reaction is L-glutamyl-tRNA(Gln) + L-glutamine + ATP + H2O = L-glutaminyl-tRNA(Gln) + L-glutamate + ADP + phosphate + H(+). The enzyme catalyses L-aspartyl-tRNA(Asn) + L-glutamine + ATP + H2O = L-asparaginyl-tRNA(Asn) + L-glutamate + ADP + phosphate + 2 H(+). Allows the formation of correctly charged Asn-tRNA(Asn) or Gln-tRNA(Gln) through the transamidation of misacylated Asp-tRNA(Asn) or Glu-tRNA(Gln) in organisms which lack either or both of asparaginyl-tRNA or glutaminyl-tRNA synthetases. The reaction takes place in the presence of glutamine and ATP through an activated phospho-Asp-tRNA(Asn) or phospho-Glu-tRNA(Gln). The sequence is that of Aspartyl/glutamyl-tRNA(Asn/Gln) amidotransferase subunit B from Methylorubrum extorquens (strain PA1) (Methylobacterium extorquens).